The primary structure comprises 7182 residues: Replicase polyprotein 1ab (7182 aa).

Positions 25 to 151 constitute a CoV Nsp1 globular domain; sequence RTDHVSLKAS…EFQFLLRKKG (127 aa). A BetaCoV Nsp1 C-terminal domain is found at 159–195; that stretch reads DAPWDYNWTPYSDLMDALEADPCGKYSQSLLKKLVGG. The 277-residue stretch at 197 to 473 folds into the CoV Nsp2 N-terminal domain; sequence FTPIDQYMCG…WSKVCETANL (277 aa). 4 residues coordinate Zn(2+): Cys-340, Cys-343, Cys-359, and Cys-361. Residues 340–361 form a C4 region; the sequence is CTSCGKGSWLTGNAVQGFACDC. In terms of domain architecture, CoV Nsp2 middle spans 479-713; sequence QHAINFVNEF…MHILSKAMQL (235 aa). Residues 715-851 enclose the CoV Nsp2 C-terminal domain; it reads HTTVSWAGSK…VPTLFRLKGG (137 aa). One can recognise a Ubiquitin-like 1 domain in the interval 855 to 964; sequence KGVKFGGEQT…MTFSVNPVEE (110 aa). Macro domains are found at residues 1186–1345 and 1354–1480; these read PLKN…KVYN and TGLT…AVQT. One can recognise a DPUP domain in the interval 1480 to 1553; it reads TPEQSFINTV…LEKCRTYLTS (74 aa). One can recognise a Ubiquitin-like 2 domain in the interval 1558–1613; it reads QKNVDVLVTIDGVNFRTVVLNNTTTYRVQLGSVFYKGSDISDTIPTEKMSGEAVYL. Residues 1628 to 1902 form the Peptidase C16 domain; the sequence is VYGTADTAFL…WADVDPDLSA (275 aa). Catalysis depends on Cys-1668, which acts as the For PL-PRO activity. Zn(2+)-binding residues include Cys-1748, Cys-1751, Cys-1783, and Cys-1785. Residues 1748–1785 form a C4-type zinc finger; the sequence is CNVCGVQDTTTTGLKACIYVGMNSLDELHATHEECCQC. Residues His-1838 and Asp-1853 each act as for PL-PRO activity in the active site. Positions 1916 to 2033 constitute a Nucleic acid-binding domain; it reads VIEYSPATIL…QVYDIAPVTL (118 aa). The G2M domain maps to 2059–2179; that stretch reads PQSPVQVAED…ASVTVNVTTA (121 aa). 3 consecutive transmembrane segments (helical) span residues 2158 to 2178, 2196 to 2216, and 2268 to 2288; these read ILLG…NVTT, GIIG…FTFW, and LLFL…LFLF. The segment at 2158–2441 is HD1; that stretch reads ILLGASSLFA…VTHIPLLGLV (284 aa). One can recognise a 3Ecto domain in the interval 2305–2371; it reads LATYRELRSY…FQMIQTHVTS (67 aa). 2 disulfides stabilise this stretch: Cys-2321–Cys-2349 and Cys-2339–Cys-2346. 3 helical membrane passes run 2372-2392, 2396-2416, and 2421-2441; these read YVIN…YVLY, FNVL…GAFV, and YNYL…LGLV. The tract at residues 2455–2545 is Y1; it reads RFYNHVINGC…SLRRLVKPTD (91 aa). The 374-residue stretch at 2455–2828 folds into the CoV Nsp3 Y domain; sequence RFYNHVINGC…LSVKFSATKL (374 aa). Residues His-2459, Cys-2464, Cys-2469, Cys-2472, Cys-2505, His-2508, Cys-2512, and Cys-2515 each coordinate Zn(2+). The tract at residues 2459 to 2472 is ZF1; sequence HVINGCKDTACLLC. The ZF2 stretch occupies residues 2505-2515; the sequence is CCRHNWNCVDC. Residues 2546-2644 are Y2; that stretch reads KSHYYVESVT…LVDSNMVTTV (99 aa). The segment at 2546-2828 is coV-Y; it reads KSHYYVESVT…LSVKFSATKL (283 aa). Residues 2645–2727 are Y3; the sequence is GDSREIASKM…DALQYAYKHD (83 aa). Residues 2728–2828 form a Y4 region; sequence LQLTTEGFNN…LSVKFSATKL (101 aa). Helical transmembrane passes span 2848 to 2868, 3119 to 3139, 3152 to 3172, and 3203 to 3223; these read CVVT…LPAF, STSL…FYYV, CAVV…FVVS, and WFVM…IVGV. The interval 2848-3223 is HD2; it reads CVVTLVVFAM…WMVFAYIVGV (376 aa). The region spanning 3242–3338 is the Nsp4C domain; that stretch reads VFTDGKLNCS…NCSVTSSVLQ (97 aa). The 306-residue stretch at 3339–3644 folds into the Peptidase C30 domain; it reads SGLVKMAAPS…NMQVMGVVMQ (306 aa). Active-site for 3CL-PRO activity residues include His-3379 and Cys-3486. Transmembrane regions (helical) follow at residues 3650–3670, 3684–3704, 3709–3729, 3760–3777, 3782–3802, 3823–3843, and 3855–3875; these read ISYG…VATL, VIPL…MLTV, TFLT…NIVY, LGVY…VRRL, ASNL…YTTG, VTVF…FLYA, and LVLL…GVFS. The interval 3650–3875 is HD3; that stretch reads ISYGLVHWLF…FCTVYFGVFS (226 aa). The region spanning 3937 to 4019 is the RdRp Nsp7 cofactor domain; that stretch reads SKLTDLKCTS…DLLDHPSVLQ (83 aa). The 199-residue stretch at 4020–4218 folds into the RdRp Nsp8 cofactor domain; the sequence is ATLSEFSHLA…RAASSAVTLQ (199 aa). The Nsp9 ssRNA-binding domain occupies 4219 to 4328; that stretch reads NNEIRPSGLK…GHIAATVRLQ (110 aa). The ExoN/MTase coactivator domain occupies 4329-4467; that stretch reads AGSNTEFAIN…DALRGTTIPQ (139 aa). Residues Cys-4402, Cys-4405, His-4411, Cys-4418, Cys-4444, Cys-4447, Cys-4455, and Cys-4457 each contribute to the Zn(2+) site. Zinc fingers lie at residues 4402 to 4418 and 4444 to 4457; these read CLYC…TGVC and CNVC…GCNC. The region spanning 4473-4730 is the NiRAN domain; the sequence is FLNRVRGSIV…AAETHRDCDL (258 aa). Mn(2+) is bound by residues Asn-4678 and Asp-4687. Residues 4735-4833 enclose the Nsp12 Interface domain; the sequence is IEWPLLEYDY…MNMDVSLHRH (99 aa). 5 residues coordinate Zn(2+): His-4764, Cys-4770, Cys-4775, Cys-4779, and Cys-4956. Positions 4834–5401 constitute a Nsp12 RNA-dependent RNA polymerase domain; that stretch reads RLSLKELMMY…DLYTAPTTLQ (568 aa). A rdRp Fingers N-ter region spans residues 4836–5050; sequence SLKELMMYAA…HQKMLKSMAA (215 aa). The segment at 5051–5089 is rdRp Palm N-ter; the sequence is TRGSTCVIGTTKFYGGWDFMLKTLYKDVDNPHLMGWDYP. A RdRp catalytic domain is found at 5081 to 5243; that stretch reads PHLMGWDYPK…CYNSDYATKG (163 aa). The rdRp Fingers C-ter stretch occupies residues 5090-5148; that stretch reads KCDRAMPNMCRIFASLILARKHSTCCTNTDRFYRLANECAQVLSEYVLCGGGYYVKPGG. Residues His-5111, Cys-5114, and Cys-5115 each contribute to the Zn(2+) site. Residues 5149-5284 form a rdRp Palm C-ter region; it reads TSSGDATTAY…KKGPHEFCSQ (136 aa). Residues Ser-5228, Asp-5229, and Asp-5230 contribute to the active site. The segment at 5285-5401 is rdRp Thumb; the sequence is HTLFIKDGDD…DLYTAPTTLQ (117 aa). Residues 5402–5514 enclose the CV ZBD domain; sequence AVGSCVVCHS…TEFNRLATCD (113 aa). Zn(2+) is bound by residues Cys-5406, Cys-5409, Cys-5417, Cys-5420, Cys-5427, Cys-5430, His-5434, His-5440, Cys-5451, Cys-5456, Cys-5473, and His-5476. The 182-residue stretch at 5658 to 5839 folds into the (+)RNA virus helicase ATP-binding domain; it reads TVPEEFANHV…MCNLGPDIFL (182 aa). 5683–5690 serves as a coordination point for ATP; that stretch reads GPPGTGKS. The (+)RNA virus helicase C-terminal domain maps to 5840 to 6014; that stretch reads SVCYRCPEEI…GLYKDCSRES (175 aa). Residues 6071–6286 enclose the ExoN domain; sequence LFITRDEAIR…RCLAIHDCFI (216 aa). Catalysis depends on residues Asp-6089, Glu-6091, and Glu-6190. Residues Cys-6206, Cys-6209, Cys-6225, His-6228, His-6256, Cys-6260, and His-6263 each coordinate Zn(2+). Residues His-6267 and Asp-6272 contribute to the active site. Cys-6278 contacts Zn(2+). An N7-MTase domain is found at 6295–6523; the sequence is YPYISHEKRL…NLWSTFTKIQ (229 aa). 6330-6336 is an S-adenosyl-L-methionine binding site; that stretch reads DIGNPKG. The segment at 6409 to 6423 is gpppA-binding; sequence CDGGSLYVNKHAFHT. The Zn(2+) site is built by Cys-6447, Cys-6469, Cys-6480, and His-6483. In terms of domain architecture, Nsp15 N-terminal oligomerization spans 6524–6584; sequence GLENIAYNVI…NIAFELYAKR (61 aa). The region spanning 6585–6715 is the AV-Nsp11N/CoV-Nsp15M domain; sequence AVRSHPDFNL…IYKKVNNEFV (131 aa). The NendoU domain occupies 6732–6871; it reads TPVSEMEKDF…KDGQVQTFYP (140 aa). Catalysis depends on residues His-6762, His-6777, Lys-6817, Lys-6920, Asp-7004, Lys-7044, and Glu-7077. In terms of domain architecture, Nidovirus-type SAM-dependent 2'-O-MTase spans 6876-7170; the sequence is INDWKPGLAM…TLSVSTDVLV (295 aa).

Belongs to the coronaviruses polyprotein 1ab family. In terms of assembly, interacts with host PHB and PHB2. As to quaternary structure, interacts with papain-like protease nsp3 and non-structural protein 6. Monomer. Homodimer. Only the homodimer shows catalytic activity. In terms of assembly, interacts with nsp8 and nsp12 to form the replication-transcription complex (RTC): nsp12, nsp7, two subunits of nsp8, and up to two subunits of nsp13. As to quaternary structure, interacts with nsp7, nsp13 and nsp12 to form the replication-transcription complex (RTC): nsp12, nsp7, two subunits of nsp8, and up to two subunits of nsp13. Interacts with nsp12. In terms of assembly, interacts with proofreading exoribonuclease nsp14 and 2'-O-methyltransferase nsp16; these interactions enhance nsp14 and nsp16 enzymatic activities. As to quaternary structure, interacts with nsp7 and nsp8 to form the replication-transcription complex (RTC): nsp12, nsp7, two subunits of nsp8, and up to two subunits of nsp13. Interacts with nsp9. Interacts with nsp8 to form the replication-transcription complex (RTC): nsp12, nsp7, two subunits of nsp8, and up to two subunits of nsp13. Mn(2+) is required as a cofactor. Mg(2+) serves as cofactor. Post-translationally, specific enzymatic cleavages in vivo by its own proteases yield mature proteins. 3CL-PRO and PL-PRO proteinases are autocatalytically processed.

It is found in the host membrane. The protein resides in the host cytoplasm. The protein localises to the host perinuclear region. Its subcellular location is the host endoplasmic reticulum-Golgi intermediate compartment. The catalysed reaction is RNA(n) + a ribonucleoside 5'-triphosphate = RNA(n+1) + diphosphate. The enzyme catalyses ATP + H2O = ADP + phosphate + H(+). It carries out the reaction Thiol-dependent hydrolysis of ester, thioester, amide, peptide and isopeptide bonds formed by the C-terminal Gly of ubiquitin (a 76-residue protein attached to proteins as an intracellular targeting signal).. It catalyses the reaction a 5'-end (N(7)-methyl 5'-triphosphoguanosine)-ribonucleoside in mRNA + S-adenosyl-L-methionine = a 5'-end (N(7)-methyl 5'-triphosphoguanosine)-(2'-O-methyl-ribonucleoside) in mRNA + S-adenosyl-L-homocysteine + H(+). The catalysed reaction is uridylyl-uridylyl-ribonucleotide-RNA = a 3'-end uridylyl-2',3'-cyclophospho-uridine-RNA + a 5'-end dephospho-ribonucleoside-RNA. The enzyme catalyses a 5'-end diphospho-ribonucleoside in mRNA + GTP + H(+) = a 5'-end (5'-triphosphoguanosine)-ribonucleoside in mRNA + diphosphate. It carries out the reaction a 5'-end (5'-triphosphoguanosine)-ribonucleoside in mRNA + S-adenosyl-L-methionine = a 5'-end (N(7)-methyl 5'-triphosphoguanosine)-ribonucleoside in mRNA + S-adenosyl-L-homocysteine. Its function is as follows. The replicase polyprotein of coronaviruses is a multifunctional protein: it contains the activities necessary for the transcription of negative stranded RNA, leader RNA, subgenomic mRNAs and progeny virion RNA as well as proteinases responsible for the cleavage of the polyprotein into functional products. Inhibits host translation by interacting with the 40S ribosomal subunit. The nsp1-40S ribosome complex further induces an endonucleolytic cleavage near the 5'UTR of host mRNAs, targeting them for degradation. Viral mRNAs are not susceptible to nsp1-mediated endonucleolytic RNA cleavage thanks to the presence of a 5'-end leader sequence and are therefore protected from degradation. By suppressing host gene expression, nsp1 facilitates efficient viral gene expression in infected cells and evasion from host immune response. In terms of biological role, may play a role in the modulation of host cell survival signaling pathway by interacting with host PHB and PHB2. Indeed, these two proteins play a role in maintaining the functional integrity of the mitochondria and protecting cells from various stresses. Functionally, responsible for the cleavages located at the N-terminus of the replicase polyprotein. In addition, PL-PRO possesses a deubiquitinating/deISGylating activity and processes both 'Lys-48'- and 'Lys-63'-linked polyubiquitin chains from cellular substrates. Participates together with nsp4 in the assembly of virally-induced cytoplasmic double-membrane vesicles necessary for viral replication. Antagonizes innate immune induction of type I interferon by blocking the phosphorylation, dimerization and subsequent nuclear translocation of host IRF3. Also prevents host NF-kappa-B signaling. Its function is as follows. Participates in the assembly of virally-induced cytoplasmic double-membrane vesicles necessary for viral replication. Cleaves the C-terminus of replicase polyprotein at 11 sites. Recognizes substrates containing the core sequence [ILMVF]-Q-|-[SGACN]. Also able to bind an ADP-ribose-1''-phosphate (ADRP). In terms of biological role, plays a role in the initial induction of autophagosomes from host endoplasmic reticulum. Later, limits the expansion of these phagosomes that are no longer able to deliver viral components to lysosomes. Functionally, forms a hexadecamer with nsp8 (8 subunits of each) that may participate in viral replication by acting as a primase. Alternatively, may synthesize substantially longer products than oligonucleotide primers. Its function is as follows. Forms a hexadecamer with nsp7 (8 subunits of each) that may participate in viral replication by acting as a primase. Alternatively, may synthesize substantially longer products than oligonucleotide primers. Forms a primer, NSP9-pU, which is utilized by the polymerase for the initiation of RNA chains. Interacts with ribosome signal recognition particle RNA (SRP). Together with NSP8, suppress protein integration into the cell membrane, thereby disrupting host immune defenses. In terms of biological role, plays a pivotal role in viral transcription by stimulating both nsp14 3'-5' exoribonuclease and nsp16 2'-O-methyltransferase activities. Therefore plays an essential role in viral mRNAs cap methylation. Functionally, RNA-directed RNA polymerase that catalyzes the transcription of viral genomic and subgenomic RNAs. Acts in complex with nsp7 and nsp8 to transcribe both the minus and positive strands of genomic RNA. The kinase-like NiRAN domain of NSP12 attaches one or more nucleotides to the amino terminus of NSP9, forming a covalent RNA-protein intermediate that serves as transcription/replication primer. Subgenomic RNAs (sgRNAs) are formed by discontinuous transcription: The polymerase has the ability to pause at transcription-regulating sequences (TRS) and jump to the leader TRS, resulting in a major deletion. This creates a series of subgenomic RNAs that are replicated, transcribed and translated. In addition, Nsp12 is a subunit of the viral RNA capping enzyme that catalyzes the RNA guanylyltransferase reaction for genomic and sub-genomic RNAs. Subsequently, the NiRAN domain transfers RNA to GDP, and forms the core cap structure GpppA-RNA. Its function is as follows. Multi-functional protein with a zinc-binding domain in N-terminus displaying RNA and DNA duplex-unwinding activities with 5' to 3' polarity. Activity of helicase is dependent on magnesium. Plays a role in viral RNA synthesis through two distinct activities. The N7-guanine methyltransferase activity plays a role in the formation of the cap structure GpppA-RNA. The proofreading exoribonuclease reduces the sensitivity of the virus to RNA mutagens during replication. This activity acts on both ssRNA and dsRNA in a 3'-5' direction. In terms of biological role, plays a role in viral transcription/replication and prevents the simultaneous activation of host cell dsRNA sensors, such as MDA5/IFIH1, OAS, and PKR. Acts by degrading the 5'-polyuridines generated during replication of the poly(A) region of viral genomic and subgenomic RNAs. Catalyzes a two-step reaction in which a 2'3'-cyclic phosphate (2'3'-cP) is first generated by 2'-O transesterification, which is then hydrolyzed to a 3'-phosphate (3'-P). If not degraded, poly(U) RNA would hybridize with poly(A) RNA tails and activate host dsRNA sensors. Functionally, methyltransferase that mediates mRNA cap 2'-O-ribose methylation to the 5'-cap structure of viral mRNAs. N7-methyl guanosine cap is a prerequisite for binding of nsp16. Therefore plays an essential role in viral mRNAs cap methylation which is essential to evade immune system. The polypeptide is Replicase polyprotein 1ab (rep) (Pipistrellus abramus (Japanese pipistrelle)).